The primary structure comprises 103 residues: Large ribosomal subunit protein uL24 (103 aa).

It belongs to the universal ribosomal protein uL24 family. Part of the 50S ribosomal subunit.

Functionally, one of two assembly initiator proteins, it binds directly to the 5'-end of the 23S rRNA, where it nucleates assembly of the 50S subunit. In terms of biological role, one of the proteins that surrounds the polypeptide exit tunnel on the outside of the subunit. In Glaesserella parasuis serovar 5 (strain SH0165) (Haemophilus parasuis), this protein is Large ribosomal subunit protein uL24.